The chain runs to 343 residues: Branched-chain-amino-acid aminotransferase (343 aa).

Lys-182 bears the N6-(pyridoxal phosphate)lysine mark.

It belongs to the class-IV pyridoxal-phosphate-dependent aminotransferase family. The cofactor is pyridoxal 5'-phosphate.

It catalyses the reaction L-leucine + 2-oxoglutarate = 4-methyl-2-oxopentanoate + L-glutamate. The catalysed reaction is L-isoleucine + 2-oxoglutarate = (S)-3-methyl-2-oxopentanoate + L-glutamate. The enzyme catalyses L-valine + 2-oxoglutarate = 3-methyl-2-oxobutanoate + L-glutamate. It participates in amino-acid biosynthesis; L-isoleucine biosynthesis; L-isoleucine from 2-oxobutanoate: step 4/4. Its pathway is amino-acid biosynthesis; L-leucine biosynthesis; L-leucine from 3-methyl-2-oxobutanoate: step 4/4. It functions in the pathway amino-acid biosynthesis; L-valine biosynthesis; L-valine from pyruvate: step 4/4. Its function is as follows. Acts on leucine, isoleucine and valine. This is Branched-chain-amino-acid aminotransferase (ilvE) from Haemophilus influenzae (strain ATCC 51907 / DSM 11121 / KW20 / Rd).